The chain runs to 431 residues: MIARILAALADSMEMPVAAGGGSVLGTIKIAVMPIAKVFTMCFLGLLMASKYVNILPPSGRKLLNGLVFSLLLPCLIFSQLGQAVTLQKMLQWWFIPVNVVLGTISGSIIGFIVASIVRPPYPYFKFTIIQIGVGNIGNVPLVLLAALCRDTSNPFGDSEKCSIDGTAYISFGQWVGAIILYTYVYQMFAPPPEGFDAEEENLALKTLPVDAAPEQVPLLTQNFPKDFSPTQDLLPVQSTEPRGRGVSRKGKIAQIFVFLYEKLKLKQIVQPAIVASILAMILGAIPFTKKLIFTNGAPLFFFTDSCMILGDAMIPCILLALGGNLINGPGSSKLGFKTTAAIIIGRLVLVPPVGLGIVTVADKLGFLPADDKMFRFVLLLQHTMPTSVLSGAVANLRGCGRESAAVLFWVHIFAIFSMAGWMVLYINILF.

Residues 1-29 are Lumenal-facing; that stretch reads MIARILAALADSMEMPVAAGGGSVLGTIK. The chain crosses the membrane as a helical span at residues 30–50; it reads IAVMPIAKVFTMCFLGLLMAS. The Cytoplasmic segment spans residues 51–66; it reads KYVNILPPSGRKLLNG. The chain crosses the membrane as a helical span at residues 67 to 87; the sequence is LVFSLLLPCLIFSQLGQAVTL. Over 88 to 93 the chain is Lumenal; the sequence is QKMLQW. Residues 94-114 form a helical membrane-spanning segment; it reads WFIPVNVVLGTISGSIIGFIV. The Cytoplasmic portion of the chain corresponds to 115–128; it reads ASIVRPPYPYFKFT. The helical transmembrane segment at 129 to 149 threads the bilayer; sequence IIQIGVGNIGNVPLVLLAALC. Residues 150-169 are Lumenal-facing; sequence RDTSNPFGDSEKCSIDGTAY. The helical transmembrane segment at 170 to 190 threads the bilayer; it reads ISFGQWVGAIILYTYVYQMFA. Residues 191 to 268 are Cytoplasmic-facing; the sequence is PPPEGFDAEE…FLYEKLKLKQ (78 aa). Residues 269 to 289 form a helical membrane-spanning segment; that stretch reads IVQPAIVASILAMILGAIPFT. At 290-306 the chain is on the lumenal side; that stretch reads KKLIFTNGAPLFFFTDS. Residues 307–327 form a helical membrane-spanning segment; it reads CMILGDAMIPCILLALGGNLI. At 328–340 the chain is on the cytoplasmic side; the sequence is NGPGSSKLGFKTT. Residues 341 to 361 form a helical membrane-spanning segment; it reads AAIIIGRLVLVPPVGLGIVTV. The Lumenal segment spans residues 362–376; the sequence is ADKLGFLPADDKMFR. Residues 377 to 397 form a helical membrane-spanning segment; sequence FVLLLQHTMPTSVLSGAVANL. The Cytoplasmic segment spans residues 398–406; that stretch reads RGCGRESAA. Residues 407 to 427 form a helical membrane-spanning segment; the sequence is VLFWVHIFAIFSMAGWMVLYI. Topologically, residues 428 to 431 are lumenal; the sequence is NILF.

The protein belongs to the auxin efflux carrier (TC 2.A.69.2) family. In terms of tissue distribution, expressed in seedlings, rosette and cauline leaves, stems and flowers.

Its subcellular location is the endoplasmic reticulum membrane. Its function is as follows. Involved in cellular auxin homeostasis by regulating auxin metabolism. Regulates intracellular auxin accumulation at the endoplasmic reticulum and thus auxin availability for nuclear auxin signaling. This Arabidopsis thaliana (Mouse-ear cress) protein is Protein PIN-LIKES 6.